The sequence spans 428 residues: Serine--tRNA ligase (428 aa).

235 to 237 (TAE) is an L-serine binding site. ATP is bound at residue 266 to 268 (RSE). Glu-289 contacts L-serine. 353-356 (EISS) contacts ATP. An L-serine-binding site is contributed by Ser-389.

It belongs to the class-II aminoacyl-tRNA synthetase family. Type-1 seryl-tRNA synthetase subfamily. Homodimer. The tRNA molecule binds across the dimer.

It is found in the cytoplasm. It catalyses the reaction tRNA(Ser) + L-serine + ATP = L-seryl-tRNA(Ser) + AMP + diphosphate + H(+). The enzyme catalyses tRNA(Sec) + L-serine + ATP = L-seryl-tRNA(Sec) + AMP + diphosphate + H(+). It functions in the pathway aminoacyl-tRNA biosynthesis; selenocysteinyl-tRNA(Sec) biosynthesis; L-seryl-tRNA(Sec) from L-serine and tRNA(Sec): step 1/1. In terms of biological role, catalyzes the attachment of serine to tRNA(Ser). Is also able to aminoacylate tRNA(Sec) with serine, to form the misacylated tRNA L-seryl-tRNA(Sec), which will be further converted into selenocysteinyl-tRNA(Sec). This chain is Serine--tRNA ligase, found in Shewanella pealeana (strain ATCC 700345 / ANG-SQ1).